Reading from the N-terminus, the 275-residue chain is Integrase homolog (275 aa).

Positions arginine 88–glycine 111 are enriched in basic and acidic residues. The segment at arginine 88–serine 120 is disordered.

It belongs to the 'phage' integrase family.

Integrase-recombinase proteins are responsible for catalyzing strand exchange between DNA molecules and play an important role in the DNA replication. In terms of biological role, may be required for the formation of concatameric complex replicative intermediates and/or their resolution before encapsidation. This is Integrase homolog (INT) from Dryophytes versicolor (chameleon treefrog).